A 134-amino-acid chain; its full sequence is Lymphocyte antigen 6I (134 aa).

Positions 1 to 21 (MDTSHAIKSCVLILLVTLLCA) are cleaved as a signal peptide. The 79-residue stretch at 27–105 (LECYQCYGVP…ISCCQEDLCN (79 aa)) folds into the UPAR/Ly6 domain. 5 disulfide bridges follow: C29/C53, C32/C41, C46/C74, C78/C98, and C99/C104. N-linked (GlcNAc...) asparagine glycosylation occurs at N95. G112 carries the GPI-anchor amidated glycine lipid modification. The propeptide at 113 to 134 (SSWTTAGVLLFSLGSVLLQTLM) is removed in mature form.

In terms of tissue distribution, expressed in hematopoietic tissue (spleen, thymus, bone marrow). Also found in peritoneal macrophages, peripheral blood leukocytes, liver, heart, brain, kidney and lung.

The protein localises to the cell membrane. The protein is Lymphocyte antigen 6I (Ly6i) of Mus musculus (Mouse).